The primary structure comprises 45 residues: Small polypeptide DEVIL 23 (45 aa).

The required for DVL/RTFL small polypeptide activity stretch occupies residues 13-44 (KSTLRCWDWCKEQRTRAYIIWRCLIFLLRWDD). A helical transmembrane segment spans residues 22–39 (CKEQRTRAYIIWRCLIFL).

Belongs to the DVL/RTFL small polypeptides family.

The protein localises to the cell membrane. Functionally, small polypeptide acting as a regulatory molecule which coordinates cellular responses required for differentiation, growth and development, probably by restricting polar cell proliferation in lateral organs and coordinating socket cell recruitment and differentiation at trichome sites. The chain is Small polypeptide DEVIL 23 from Arabidopsis thaliana (Mouse-ear cress).